Consider the following 176-residue polypeptide: Xanthine-guanine phosphoribosyltransferase (176 aa).

Residues 51 to 52 and 110 to 118 each bind 5-phospho-alpha-D-ribose 1-diphosphate; these read RG and DDLVDTGKT. D111 provides a ligand contact to Mg(2+). Guanine-binding residues include D114 and I157. Positions 114 and 157 each coordinate xanthine. Residues 114–118 and 156–157 each bind GMP; these read DTGKT and WI.

The protein belongs to the purine/pyrimidine phosphoribosyltransferase family. XGPT subfamily. As to quaternary structure, homotetramer. Mg(2+) serves as cofactor.

Its subcellular location is the cell inner membrane. The enzyme catalyses GMP + diphosphate = guanine + 5-phospho-alpha-D-ribose 1-diphosphate. The catalysed reaction is XMP + diphosphate = xanthine + 5-phospho-alpha-D-ribose 1-diphosphate. It carries out the reaction IMP + diphosphate = hypoxanthine + 5-phospho-alpha-D-ribose 1-diphosphate. It functions in the pathway purine metabolism; GMP biosynthesis via salvage pathway; GMP from guanine: step 1/1. The protein operates within purine metabolism; XMP biosynthesis via salvage pathway; XMP from xanthine: step 1/1. In terms of biological role, purine salvage pathway enzyme that catalyzes the transfer of the ribosyl-5-phosphate group from 5-phospho-alpha-D-ribose 1-diphosphate (PRPP) to the N9 position of the 6-oxopurines guanine and xanthine to form the corresponding ribonucleotides GMP (guanosine 5'-monophosphate) and XMP (xanthosine 5'-monophosphate), with the release of PPi. To a lesser extent, also acts on hypoxanthine. This Bradyrhizobium diazoefficiens (strain JCM 10833 / BCRC 13528 / IAM 13628 / NBRC 14792 / USDA 110) protein is Xanthine-guanine phosphoribosyltransferase.